A 287-amino-acid polypeptide reads, in one-letter code: MSHHPDPPATPPASPPVTIPMLQAWRAEGRRIVMVTAYDAAMARLVDPVVDVILVGDSVGNVCLGFDNTLPVSLAMMNHHVEAVARARPRALLVADMPFLTFHLDLPDTIRNAGGFLQRGAAAVKLEGGAARVPVVEALVACEIPVMGHLGLTPQSVNAMGGFKVQGRAVAQARRIVEDAKRLEDAGCFSLVLEGIPAELAARITEALAIPTIGIGAGPHCAGQVLVLHDLLGLLPGRKAKFVRTYVDGYGLLQAGLAAYAEDVRAGRFPGPEESYALPEAVRAALD.

Positions 57 and 96 each coordinate Mg(2+). Residues 57–58, D96, and K125 contribute to the 3-methyl-2-oxobutanoate site; that span reads DS. Mg(2+) is bound at residue E127. E194 serves as the catalytic Proton acceptor.

It belongs to the PanB family. Homodecamer; pentamer of dimers. It depends on Mg(2+) as a cofactor.

It localises to the cytoplasm. It catalyses the reaction 3-methyl-2-oxobutanoate + (6R)-5,10-methylene-5,6,7,8-tetrahydrofolate + H2O = 2-dehydropantoate + (6S)-5,6,7,8-tetrahydrofolate. It functions in the pathway cofactor biosynthesis; (R)-pantothenate biosynthesis; (R)-pantoate from 3-methyl-2-oxobutanoate: step 1/2. In terms of biological role, catalyzes the reversible reaction in which hydroxymethyl group from 5,10-methylenetetrahydrofolate is transferred onto alpha-ketoisovalerate to form ketopantoate. The polypeptide is 3-methyl-2-oxobutanoate hydroxymethyltransferase (Methylobacterium sp. (strain 4-46)).